The following is an 890-amino-acid chain: MTVEQLSPHSKSHPLTGEEIRTAFLHFFAERGHQVLPSASLVPDDPTVLLTIAGMLPFKPVFLGHEERPSSRVVTSQKCIRTNDIENVGRTARHQTYFEMLGNFSFGDYFKKEAIQWAWELSTKTFGLDPKYLVVSIFREDDDAYEIWRNIIGVNPDRIIRMDEADNFWSSGPTGPCGPCSELYYDFNPELGNHCIDLEDDTRFIEFYNLVFMEFNRDSTGRLSSLSNCNIDTGMGLERMAQILQKVPNNYETDLIYPLLEKVAYLVGVDYQKTDKKTRISYKVIGDHIRACVQLISDGVSASNLGRGYILRRLLRRIVRHGRLLGIPKPFLIDLGEVAISLMKSTYPQLLERRDVILKELQREELRFLETLERGERLLADLLSNNPKEISGEQAFELYDTYGFPLELTQEIAEENSIEVDLKAFEKAMQRQRIRAKAASTTIDLTLQDTLDKAVRELKPTNFKGYECLTETSTVQAIFINGELAQEAQENDVIQVALDITPFYGESGGQIGDTGILFKESVTNCLIEIDSVIRNNDVFVHRGIVKNGRLQVGDIIQSQVHHINRRRAQINHTATHLLQASLKEIVGSEISQAGSLVSFERLRFDFHCSSPVSSEELEKVEKKINLWISESHSLVVKEMKIDDAKQAGAVAMFGEKYGTLVRVVDVPGVSMELCGGTHVANTADIGAFKIVGESGIAAGIRRIEAVAGPGVFDYFNARDSVVRILSERFKVQSNEIVDRVIALQDEVKLLGKSLIKAQEEIAFAKTSALVSKATAIKSSHYIIHRLDGVPSEALQSAAKVLVDQLGDCSAVLLAGTPTQSDPNKVILVAAFGAKTVAHGLHAGKFLGPIAKMCGGGGGGRPNFAQAGGRDAKPLDKALDLAREQLMGALL.

4 residues coordinate Zn(2+): H572, H576, C674, and H678.

This sequence belongs to the class-II aminoacyl-tRNA synthetase family. Zn(2+) serves as cofactor.

The protein localises to the cytoplasm. It catalyses the reaction tRNA(Ala) + L-alanine + ATP = L-alanyl-tRNA(Ala) + AMP + diphosphate. Functionally, catalyzes the attachment of alanine to tRNA(Ala) in a two-step reaction: alanine is first activated by ATP to form Ala-AMP and then transferred to the acceptor end of tRNA(Ala). Also edits incorrectly charged Ser-tRNA(Ala) and Gly-tRNA(Ala) via its editing domain. The protein is Alanine--tRNA ligase of Prochlorococcus marinus (strain MIT 9211).